Reading from the N-terminus, the 191-residue chain is Elongation factor P (191 aa).

K34 bears the N6-(3,6-diaminohexanoyl)-5-hydroxylysine mark.

This sequence belongs to the elongation factor P family. May be beta-lysylated on the epsilon-amino group of Lys-34 by the combined action of EpmA and EpmB, and then hydroxylated on the C5 position of the same residue by EpmC (if this protein is present). Lysylation is critical for the stimulatory effect of EF-P on peptide-bond formation. The lysylation moiety may extend toward the peptidyltransferase center and stabilize the terminal 3-CCA end of the tRNA. Hydroxylation of the C5 position on Lys-34 may allow additional potential stabilizing hydrogen-bond interactions with the P-tRNA.

It localises to the cytoplasm. Its pathway is protein biosynthesis; polypeptide chain elongation. Involved in peptide bond synthesis. Alleviates ribosome stalling that occurs when 3 or more consecutive Pro residues or the sequence PPG is present in a protein, possibly by augmenting the peptidyl transferase activity of the ribosome. Modification of Lys-34 is required for alleviation. The sequence is that of Elongation factor P from Colwellia psychrerythraea (strain 34H / ATCC BAA-681) (Vibrio psychroerythus).